The following is a 70-amino-acid chain: Small ribosomal subunit protein bS21 (70 aa).

Belongs to the bacterial ribosomal protein bS21 family.

The polypeptide is Small ribosomal subunit protein bS21 (Cupriavidus pinatubonensis (strain JMP 134 / LMG 1197) (Cupriavidus necator (strain JMP 134))).